We begin with the raw amino-acid sequence, 389 residues long: Lipid-A-disaccharide synthase (389 aa).

Belongs to the LpxB family.

It carries out the reaction a lipid X + a UDP-2-N,3-O-bis[(3R)-3-hydroxyacyl]-alpha-D-glucosamine = a lipid A disaccharide + UDP + H(+). The protein operates within bacterial outer membrane biogenesis; LPS lipid A biosynthesis. In terms of biological role, condensation of UDP-2,3-diacylglucosamine and 2,3-diacylglucosamine-1-phosphate to form lipid A disaccharide, a precursor of lipid A, a phosphorylated glycolipid that anchors the lipopolysaccharide to the outer membrane of the cell. The protein is Lipid-A-disaccharide synthase of Burkholderia ambifaria (strain ATCC BAA-244 / DSM 16087 / CCUG 44356 / LMG 19182 / AMMD) (Burkholderia cepacia (strain AMMD)).